An 885-amino-acid chain; its full sequence is Leucine--tRNA ligase (885 aa).

Positions Pro-48–His-58 match the 'HIGH' region motif. The 'KMSKS' region motif lies at Thr-639 to Ser-643. Residue Lys-642 coordinates ATP.

This sequence belongs to the class-I aminoacyl-tRNA synthetase family.

The protein localises to the cytoplasm. It catalyses the reaction tRNA(Leu) + L-leucine + ATP = L-leucyl-tRNA(Leu) + AMP + diphosphate. This is Leucine--tRNA ligase from Bordetella parapertussis (strain 12822 / ATCC BAA-587 / NCTC 13253).